Reading from the N-terminus, the 228-residue chain is L-ribulose-5-phosphate 4-epimerase UlaF (228 aa).

Substrate-binding positions include 26 to 27 (GN), 43 to 44 (SG), and 72 to 73 (SS). Asp-74, His-93, and His-95 together coordinate Zn(2+). Catalysis depends on Asp-118, which acts as the Proton donor/acceptor. His-167 contributes to the Zn(2+) binding site. Tyr-225 acts as the Proton donor/acceptor in catalysis.

This sequence belongs to the aldolase class II family. AraD/FucA subfamily. Zn(2+) is required as a cofactor.

The enzyme catalyses L-ribulose 5-phosphate = D-xylulose 5-phosphate. Its pathway is cofactor degradation; L-ascorbate degradation; D-xylulose 5-phosphate from L-ascorbate: step 4/4. Functionally, catalyzes the isomerization of L-ribulose 5-phosphate to D-xylulose 5-phosphate. Is involved in the anaerobic L-ascorbate utilization. The chain is L-ribulose-5-phosphate 4-epimerase UlaF from Escherichia coli O45:K1 (strain S88 / ExPEC).